The sequence spans 313 residues: MTLEQIKEIYSRPLTELILQALEIHNKNFGNDIELCSLKSIKTGTCPEDCKYCPQSGHYNTSIEKHKLLDKDSILAEAKNAKDAGSKRFCMGAAWKHIPKKDFDQVAEIITEVKNLGLETCVTLGSINAEEATKLKEAGLDYYNHNLDTSREFYPEIITTRKFEERIETIRNVANADINVCCGGILGMGESLDDRFNLLLELLQLPAAPKSIPINTLIPVKGTPLGDKYTDAQIDSFELVRFIATTRILFPQARLRLSAGRENMSLETQTLCFLAGINSIFYGNKLLTENNATINSDNFLLAKLGLESNVELC.

Positions 28–258 constitute a Radical SAM core domain; that stretch reads NFGNDIELCS…LFPQARLRLS (231 aa). 3 residues coordinate [4Fe-4S] cluster: cysteine 46, cysteine 50, and cysteine 53. Residues cysteine 90, cysteine 121, cysteine 181, and arginine 256 each coordinate [2Fe-2S] cluster.

It belongs to the radical SAM superfamily. Biotin synthase family. Homodimer. The cofactor is [4Fe-4S] cluster. Requires [2Fe-2S] cluster as cofactor.

The enzyme catalyses (4R,5S)-dethiobiotin + (sulfur carrier)-SH + 2 reduced [2Fe-2S]-[ferredoxin] + 2 S-adenosyl-L-methionine = (sulfur carrier)-H + biotin + 2 5'-deoxyadenosine + 2 L-methionine + 2 oxidized [2Fe-2S]-[ferredoxin]. It participates in cofactor biosynthesis; biotin biosynthesis; biotin from 7,8-diaminononanoate: step 2/2. Functionally, catalyzes the conversion of dethiobiotin (DTB) to biotin by the insertion of a sulfur atom into dethiobiotin via a radical-based mechanism. This is Biotin synthase from Francisella philomiragia subsp. philomiragia (strain ATCC 25017 / CCUG 19701 / FSC 153 / O#319-036).